Consider the following 860-residue polypeptide: Eukaryotic translation initiation factor 3 subunit C (860 aa).

The segment at 1-79 is disordered; it reads MSSRFFHGGS…ESDEEEDRVT (79 aa). Acidic residues-rich tracts occupy residues 16 to 53 and 67 to 76; these read SSDEEELYSDRDEEEVSDEEEETTSEEESSEEESDDEA and DLDESDEEED. Residues 598–772 form the PCI domain; sequence FHMHINLELL…NAIVFRKGVE (175 aa). The tract at residues 808-860 is disordered; the sequence is AFQRDQGPGGRLGRGQGRGGQRTAGGRPPIGGQQRRPGGQQFSGGALGGAIKA. Residues 814-830 are compositionally biased toward gly residues; it reads GPGGRLGRGQGRGGQRT. Residues 831–847 show a composition bias toward low complexity; it reads AGGRPPIGGQQRRPGGQ. A compositionally biased stretch (gly residues) spans 848–860; the sequence is QFSGGALGGAIKA.

This sequence belongs to the eIF-3 subunit C family. As to quaternary structure, component of the eukaryotic translation initiation factor 3 (eIF-3) complex.

Its subcellular location is the cytoplasm. Its function is as follows. Component of the eukaryotic translation initiation factor 3 (eIF-3) complex, which is involved in protein synthesis of a specialized repertoire of mRNAs and, together with other initiation factors, stimulates binding of mRNA and methionyl-tRNAi to the 40S ribosome. The eIF-3 complex specifically targets and initiates translation of a subset of mRNAs involved in cell proliferation. This Coccidioides immitis (strain RS) (Valley fever fungus) protein is Eukaryotic translation initiation factor 3 subunit C.